Consider the following 321-residue polypeptide: Glucokinase (321 aa).

8–13 lines the ATP pocket; that stretch reads GDVGGT.

This sequence belongs to the bacterial glucokinase family.

Its subcellular location is the cytoplasm. It catalyses the reaction D-glucose + ATP = D-glucose 6-phosphate + ADP + H(+). In Escherichia fergusonii (strain ATCC 35469 / DSM 13698 / CCUG 18766 / IAM 14443 / JCM 21226 / LMG 7866 / NBRC 102419 / NCTC 12128 / CDC 0568-73), this protein is Glucokinase.